The primary structure comprises 99 residues: Nucleoid-associated protein SPy_1862/M5005_Spy1580 (99 aa).

Belongs to the YbaB/EbfC family. In terms of assembly, homodimer.

It is found in the cytoplasm. The protein localises to the nucleoid. Functionally, binds to DNA and alters its conformation. May be involved in regulation of gene expression, nucleoid organization and DNA protection. This chain is Nucleoid-associated protein SPy_1862/M5005_Spy1580, found in Streptococcus pyogenes serotype M1.